Reading from the N-terminus, the 330-residue chain is T-cell surface glycoprotein CD1b4 (330 aa).

Positions 1-15 are cleaved as a signal peptide; it reads MLLLALAFFFPAGDT. Residues 16 to 299 lie on the Extracellular side of the membrane; the sequence is QNVLPGKISF…LYWGHSISIG (284 aa). N-linked (GlcNAc...) asparagine glycans are attached at residues Asn35, Asn72, and Asn143. Disulfide bonds link Cys117/Cys181 and Cys221/Cys276. In terms of domain architecture, Ig-like spans 182 to 292; the sequence is PRYLMSVIEA…LEGQDIILYW (111 aa). The helical transmembrane segment at 300–320 threads the bilayer; it reads WIILAVLVPCLIVLVLFILWF. At 321–330 the chain is on the cytoplasmic side; sequence YRRWSYEDIF. The short motif at 326–329 is the Internalization signal element; sequence YEDI.

In terms of assembly, heterodimer with B2M (beta-2-microglobulin). Interacts with saposin C.

It is found in the cell membrane. It localises to the endosome membrane. Its subcellular location is the lysosome membrane. Functionally, antigen-presenting protein that binds self and non-self lipid and glycolipid antigens and presents them to T-cell receptors on natural killer T-cells. The sequence is that of T-cell surface glycoprotein CD1b4 (CD1B4) from Cavia porcellus (Guinea pig).